The chain runs to 746 residues: NAD(P)H-quinone oxidoreductase subunit 5, chloroplastic (746 aa).

16 helical membrane passes run 9–29, 40–60, 88–108, 125–145, 147–167, 185–205, 225–245, 258–278, 283–303, 327–347, 354–374, 396–416, 425–445, 554–574, 610–630, and 726–746; these read YIILFLPLPVTMSIGFGLLFV, WAFVSVLLLSMVMGFSVNLAI, LIDPLTSIMSLLISTVGIMVL, FAYMSFFNTSMLGLVTSSNLI, IHIFWELVGMCSYLLIGFWFT, GDFGLLLGILGFYWITGSLEF, FAILCACLLFLGAVAKSAQFP, TPISALIHAATMVAAGIFLVA, LFIVIPYIMNLISLIGIITLL, LGYIMLALGIGSYRAALFHLI, ALLFLGSGSIIHSMEPVVGYS, TTFLLGTLSLCGIPPLACFWS, WLYSPIFAIIAYFTAGLTAFY, LFPLLVLVLFTLVVGLIGIPF, IFSVSVSLFGLFIASIFYGSV, and YLFLYLSYVSIFLIFYQYFDF.

The protein belongs to the complex I subunit 5 family. NDH is composed of at least 16 different subunits, 5 of which are encoded in the nucleus.

The protein resides in the plastid. It localises to the chloroplast thylakoid membrane. It catalyses the reaction a plastoquinone + NADH + (n+1) H(+)(in) = a plastoquinol + NAD(+) + n H(+)(out). The catalysed reaction is a plastoquinone + NADPH + (n+1) H(+)(in) = a plastoquinol + NADP(+) + n H(+)(out). Functionally, NDH shuttles electrons from NAD(P)H:plastoquinone, via FMN and iron-sulfur (Fe-S) centers, to quinones in the photosynthetic chain and possibly in a chloroplast respiratory chain. The immediate electron acceptor for the enzyme in this species is believed to be plastoquinone. Couples the redox reaction to proton translocation, and thus conserves the redox energy in a proton gradient. In Dioscorea elephantipes (Elephant's foot yam), this protein is NAD(P)H-quinone oxidoreductase subunit 5, chloroplastic (ndhF).